The chain runs to 484 residues: Acetaldehyde dehydrogenase (acetylating) (484 aa).

It belongs to the aldehyde dehydrogenase family.

The catalysed reaction is acetaldehyde + NAD(+) + CoA = acetyl-CoA + NADH + H(+). Its pathway is organosulfur degradation; alkanesulfonate degradation. Involved in an anaerobic respiration pathway that converts the sulfonate taurine (2-aminoethanesulfonate) to ammonia, acetate and sulfide. Catalyzes the oxidation of acetaldehyde to acetyl-CoA in the presence of CoASH and NAD(+). Highly prefers NAD(+) over NADP(+). This Bilophila wadsworthia (strain 3_1_6) protein is Acetaldehyde dehydrogenase (acetylating).